A 302-amino-acid polypeptide reads, in one-letter code: Dihydroorotate dehydrogenase B (NAD(+)), catalytic subunit (302 aa).

FMN contacts are provided by residues Ser23 and 47 to 48; that span reads KG. Substrate is bound by residues Lys47 and 71–75; that span reads NSVGL. FMN contacts are provided by Asn101 and Asn128. A substrate-binding site is contributed by Asn128. The active-site Nucleophile is Cys131. FMN contacts are provided by Lys166 and Ile192. 193-194 provides a ligand contact to substrate; sequence NT. FMN is bound by residues Gly218, 244–245, and 266–267; these read GG and GT.

It belongs to the dihydroorotate dehydrogenase family. Type 1 subfamily. In terms of assembly, heterotetramer of 2 PyrK and 2 PyrD type B subunits. Requires FMN as cofactor.

The protein resides in the cytoplasm. It catalyses the reaction (S)-dihydroorotate + NAD(+) = orotate + NADH + H(+). It functions in the pathway pyrimidine metabolism; UMP biosynthesis via de novo pathway; orotate from (S)-dihydroorotate (NAD(+) route): step 1/1. Catalyzes the conversion of dihydroorotate to orotate with NAD(+) as electron acceptor. The sequence is that of Dihydroorotate dehydrogenase B (NAD(+)), catalytic subunit (pyrD) from Alkaliphilus metalliredigens (strain QYMF).